A 217-amino-acid chain; its full sequence is Translation initiation factor IF-3 (217 aa).

Belongs to the IF-3 family. Monomer.

The protein resides in the cytoplasm. Functionally, IF-3 binds to the 30S ribosomal subunit and shifts the equilibrium between 70S ribosomes and their 50S and 30S subunits in favor of the free subunits, thus enhancing the availability of 30S subunits on which protein synthesis initiation begins. The polypeptide is Translation initiation factor IF-3 (Synechococcus sp. (strain CC9902)).